Reading from the N-terminus, the 57-residue chain is Large ribosomal subunit protein bL32 (57 aa).

The tract at residues 1–38 (MAVQQNKPTRSKRGMRRSHDALTAVTSLSVDKTSGEKH) is disordered.

This sequence belongs to the bacterial ribosomal protein bL32 family.

The chain is Large ribosomal subunit protein bL32 from Escherichia coli O7:K1 (strain IAI39 / ExPEC).